The primary structure comprises 241 residues: Chloride intracellular channel protein 1 (241 aa).

Ala2 is modified (N-acetylalanine). Positions Ala2–Pro90 are required for insertion into the membrane. Position 13 is an N6-acetyllysine (Lys13). The G-site signature appears at Cys24–Ser27. A disulfide bridge links Cys24 with Cys59. A helical membrane pass occupies residues Phe26 to Val46. Residues Tyr93–Tyr233 form the GST C-terminal domain. At Lys119 the chain carries N6-acetyllysine. Position 121 is a phosphoserine (Ser121). Residue Lys131 is modified to N6-acetyllysine. At Ser156 the chain carries Phosphoserine. Phosphotyrosine is present on Tyr233.

Belongs to the chloride channel CLIC family. As to quaternary structure, monomer. Homodimer (in vitro). Interacts with TRAPPC2. Dimerization requires a conformation change that leads to the exposure of a large hydrophobic surface. In vivo, this may lead to membrane insertion.

The protein localises to the nucleus. It localises to the nucleus membrane. It is found in the cytoplasm. Its subcellular location is the cell membrane. The protein resides in the endoplasmic reticulum. It catalyses the reaction L-dehydroascorbate + 2 glutathione = glutathione disulfide + L-ascorbate. The catalysed reaction is chloride(in) = chloride(out). The enzyme catalyses iodide(out) = iodide(in). It carries out the reaction thiocyanate(in) = thiocyanate(out). It catalyses the reaction nitrate(in) = nitrate(out). The catalysed reaction is bromide(in) = bromide(out). The enzyme catalyses fluoride(in) = fluoride(out). In terms of biological role, in the soluble state, catalyzes glutaredoxin-like thiol disulfide exchange reactions with reduced glutathione as electron donor. Reduces selenite and dehydroascorbate and may act as an antioxidant during oxidative stress response. Can insert into membranes and form voltage-dependent multi-ion conductive channels. Membrane insertion seems to be redox-regulated and may occur only under oxidizing conditions. Involved in regulation of the cell cycle. The polypeptide is Chloride intracellular channel protein 1 (CLIC1) (Bos taurus (Bovine)).